The following is a 278-amino-acid chain: Probable esterase TOX9 (278 aa).

Catalysis depends on charge relay system residues serine 119, aspartate 222, and histidine 250.

It belongs to the LovG family.

It participates in mycotoxin biosynthesis. Probable esterase; part of the Tox1A locus, one of the 2 loci that mediate the biosynthesis of T-toxin, a family of linear polyketides 37 to 45 carbons in length, of which the major component is 41 carbons, and which leads to high virulence to maize. One of the PKSs (PKS1 or PKS2) could synthesize a precursor, used subsequently by the other PKS as starter unit, to add additional carbons. Variability in the length of the final carbon backbone C35-47 could be achieved by varying the number of condensation cycles, or use of different starter or extender units or might be due to decarboxylation of the penultimate product, catalyzed by DEC1. Additional proteins are required for the biosynthesis of T-toxin, including oxidoreductases RED1, RED2, RED3, LAM1 and OXI1, as well as esterase TOX9. The protein is Probable esterase TOX9 of Cochliobolus heterostrophus (strain C4 / ATCC 48331 / race T) (Southern corn leaf blight fungus).